A 130-amino-acid polypeptide reads, in one-letter code: Small ribosomal subunit protein uS8 (130 aa).

Belongs to the universal ribosomal protein uS8 family.

The protein resides in the cytoplasm. The chain is Small ribosomal subunit protein uS8 (RPS15A) from Daucus carota (Wild carrot).